We begin with the raw amino-acid sequence, 669 residues long: DNA ligase (669 aa).

Residues 34-38, 83-84, and E114 each bind NAD(+); these read DAEYD and SL. K116 (N6-AMP-lysine intermediate) is an active-site residue. The NAD(+) site is built by R137, E171, K287, and K311. Positions 405, 408, 423, and 428 each coordinate Zn(2+). Residues 591–669 form the BRCT domain; that stretch reads NVESYFAGKT…EERFLQELNK (79 aa).

The protein belongs to the NAD-dependent DNA ligase family. LigA subfamily. Mg(2+) serves as cofactor. It depends on Mn(2+) as a cofactor.

The enzyme catalyses NAD(+) + (deoxyribonucleotide)n-3'-hydroxyl + 5'-phospho-(deoxyribonucleotide)m = (deoxyribonucleotide)n+m + AMP + beta-nicotinamide D-nucleotide.. DNA ligase that catalyzes the formation of phosphodiester linkages between 5'-phosphoryl and 3'-hydroxyl groups in double-stranded DNA using NAD as a coenzyme and as the energy source for the reaction. It is essential for DNA replication and repair of damaged DNA. The polypeptide is DNA ligase (Bacillus cereus (strain ZK / E33L)).